A 193-amino-acid polypeptide reads, in one-letter code: Acyl carrier protein phosphodiesterase (193 aa).

It belongs to the AcpH family.

It catalyses the reaction holo-[ACP] + H2O = apo-[ACP] + (R)-4'-phosphopantetheine + H(+). Converts holo-ACP to apo-ACP by hydrolytic cleavage of the phosphopantetheine prosthetic group from ACP. The polypeptide is Acyl carrier protein phosphodiesterase (Escherichia coli O6:H1 (strain CFT073 / ATCC 700928 / UPEC)).